The following is a 398-amino-acid chain: Phosphoglycerate kinase (398 aa).

Substrate is bound by residues 21–23 (DFN), Arg-36, 59–62 (HLGR), Arg-119, and Arg-157. ATP is bound by residues Lys-208, Gly-296, Glu-327, and 354-357 (GGDS).

The protein belongs to the phosphoglycerate kinase family. Monomer.

The protein resides in the cytoplasm. The catalysed reaction is (2R)-3-phosphoglycerate + ATP = (2R)-3-phospho-glyceroyl phosphate + ADP. It participates in carbohydrate degradation; glycolysis; pyruvate from D-glyceraldehyde 3-phosphate: step 2/5. The polypeptide is Phosphoglycerate kinase (Lactococcus lactis subsp. cremoris (strain SK11)).